Consider the following 127-residue polypeptide: Large-conductance mechanosensitive channel (127 aa).

3 helical membrane passes run 19-39, 42-62, and 67-87; these read VGVI…TNII, LLGI…VGSA, and GAFI…FLLI.

The protein belongs to the MscL family. As to quaternary structure, homopentamer.

The protein resides in the cell membrane. In terms of biological role, channel that opens in response to stretch forces in the membrane lipid bilayer. May participate in the regulation of osmotic pressure changes within the cell. This chain is Large-conductance mechanosensitive channel, found in Levilactobacillus brevis (strain ATCC 367 / BCRC 12310 / CIP 105137 / JCM 1170 / LMG 11437 / NCIMB 947 / NCTC 947) (Lactobacillus brevis).